The chain runs to 907 residues: Glutamate receptor 1 (907 aa).

The first 18 residues, 1–18 (MPYIFAFFCTGFLGAVVG), serve as a signal peptide directing secretion. The Extracellular portion of the chain corresponds to 19 to 536 (ANFPNNIQIG…GVFSFLDPLA (518 aa)). Asparagine 63, asparagine 249, asparagine 257, asparagine 363, asparagine 401, and asparagine 406 each carry an N-linked (GlcNAc...) asparagine glycan. The cysteines at positions 75 and 323 are disulfide-linked. Residues proline 492, threonine 494, and arginine 499 each coordinate L-glutamate. A helical membrane pass occupies residues 537–557 (YEIWMCIVFAYIGVSVVLFLV). Residues 558–584 (SRFSPYEWHSEEFEEGRDQTTSDQSNE) are Cytoplasmic-facing. Positions 585 to 600 (FGIFNSLWFSLGAFMQ) form an intramembrane region, helical; Pore-forming. Residues 601-603 (QGC) lie within the membrane without spanning it. Cysteine 603 is lipidated: S-palmitoyl cysteine. The Cytoplasmic segment spans residues 604 to 609 (DISPRS). Residues 610–630 (LSGRIVGGVWWFFTLIIISSY) traverse the membrane as a helical segment. The Extracellular segment spans residues 631 to 805 (TANLAAFLTV…DKTSALSLSN (175 aa)). Residue serine 645 is modified to Phosphoserine. Residues serine 668 and threonine 669 each coordinate L-glutamate. At serine 710 the chain carries Phosphoserine. L-glutamate is bound at residue glutamate 719. A disulfide bridge connects residues cysteine 732 and cysteine 787. Residues 806–826 (VAGVFYILIGGLGLAMLVALI) form a helical membrane-spanning segment. Residues 827 to 907 (EFCYKSRSES…SGMPLGATGL (81 aa)) lie on the Cytoplasmic side of the membrane. Residue cysteine 829 is the site of S-palmitoyl cysteine attachment. Phosphoserine occurs at positions 849 and 863. The disordered stretch occupies residues 857 to 881 (STLPRNSGAGASGGSGSGENGRVVS). The span at 866-875 (GASGGSGSGE) shows a compositional bias: gly residues. Residues 904 to 907 (ATGL) carry the PDZ-binding motif.

Belongs to the glutamate-gated ion channel (TC 1.A.10.1) family. GRIA1 subfamily. Homotetramer or heterotetramer of pore-forming glutamate receptor subunits. Heteromeric assembly can be the result of both receptor subtype and flip or flop form and according the composition, one partner can be dominant with respect to the fast desensitizing current component, whereas the other can determine the steady-state component. Tetramers may be formed by the dimerization of dimers. Found in a complex with GRIA2, GRIA3, GRIA4, CNIH2, CNIH3, CACNG2, CACNG3, CACNG4, CACNG5, CACNG7 and CACNG8. Interacts with HIP1 and RASGRF2. Interacts with SYNDIG1 and GRIA2. Interacts with DLG1 (via C-terminus). Interacts with LRFN1. Interacts with PRKG2. Interacts with CNIH2 and CACNG2. Interacts with CACNG5; this interaction modulates the gating. Interacts (via C-terminus) with PDLIM4 (via LIM domain); this interaction as well as the interaction of PDLIM4 with alpha-actinin is required for their colocalization in early endosomes. Interacts with SNX27 (via PDZ domain); the interaction is required for recycling to the plasma membrane when endocytosed and prevent degradation in lysosomes. Interacts (via PDZ-binding motif) with SHANK3 (via PDZ domain). Interacts with CACNG3; associates GRIA1 with the adapter protein complex 4 (AP-4) to target GRIA1 to the somatodendritic compartment of neurons. Interacts with CACNG2; this interaction mediates traffick to the plasma membrane and modulation of desensitization. Interacts with CNIH2 and CNIH3; this interaction promotes expression at the plasma membrane and extensively modulates their gating properties by slowing deactivation and desensitization kinetics. Found in a complex with GRIA2, GRIA3, GRIA4, DLG4, CACNG8 and CNIH2. Post-translationally, phosphorylated at Ser-645. Phosphorylated at Ser-710 by PKC. Phosphorylated at Ser-849 by PKC, PKA and CAMK2. Phosphorylated at Ser-863 by PKC, PKA and PRKG2. Phosphorylation of Ser-863 is reduced by induction of long-term depression and increased by induction of long-term potentiation. Palmitoylated. Depalmitoylated by CPT1C and upon L-glutamate stimulation. ZDHHC3/GODZ specifically palmitoylates Cys-603, which leads to Golgi retention and decreased cell surface expression. In contrast, Cys-829 palmitoylation does not affect cell surface expression but regulates stimulation-dependent endocytosis. As to expression, expressed in the outer plexiform layer of the retina of the eye (at protein level). Expressed in the forebrain and hippocampus (at protein level).

It localises to the cell membrane. The protein localises to the endoplasmic reticulum membrane. The protein resides in the postsynaptic cell membrane. Its subcellular location is the postsynaptic density membrane. It is found in the cell projection. It localises to the dendrite. The protein localises to the dendritic spine. The protein resides in the early endosome membrane. Its subcellular location is the recycling endosome membrane. It is found in the presynapse. It localises to the synapse. The enzyme catalyses Ca(2+)(in) = Ca(2+)(out). It catalyses the reaction Na(+)(in) = Na(+)(out). The catalysed reaction is Mg(2+)(in) = Mg(2+)(out). It carries out the reaction Li(+)(in) = Li(+)(out). The enzyme catalyses K(+)(in) = K(+)(out). It catalyses the reaction Sr(2+)(in) = Sr(2+)(out). In terms of biological role, ionotropic glutamate receptor that functions as a ligand-gated cation channel, gated by L-glutamate and glutamatergic agonists such as alpha-amino-3-hydroxy-5-methyl-4-isoxazolepropionic acid (AMPA), quisqualic acid, and kainic acid. L-glutamate acts as an excitatory neurotransmitter at many synapses in the central nervous system. Binding of the excitatory neurotransmitter L-glutamate induces a conformation change, leading to the opening of the cation channel, and thereby converts the chemical signal to an electrical impulse upon entry of monovalent and divalent cations such as sodium and calcium. The receptor then desensitizes rapidly and enters in a transient inactive state, characterized by the presence of bound agonist. In the presence of CACNG2 or CACNG4 or CACNG7 or CACNG8, shows resensitization which is characterized by a delayed accumulation of current flux upon continued application of L-glutamate. Calcium (Ca(2+)) permeability depends on subunits composition and, heteromeric channels containing edited GRIA2 subunit are calcium-impermeable. Also permeable to other divalents cations such as strontium(2+) and magnesium(2+) and monovalent cations such as potassium(1+) and lithium(1+). This is Glutamate receptor 1 from Mus musculus (Mouse).